The following is a 348-amino-acid chain: Flagellar P-ring protein (348 aa).

Positions 1–24 (MRRKNNNKIWIWVATLILSISALY) are cleaved as a signal peptide.

It belongs to the FlgI family. As to quaternary structure, the basal body constitutes a major portion of the flagellar organelle and consists of four rings (L,P,S, and M) mounted on a central rod.

The protein localises to the periplasm. It is found in the bacterial flagellum basal body. Assembles around the rod to form the L-ring and probably protects the motor/basal body from shearing forces during rotation. The chain is Flagellar P-ring protein from Helicobacter hepaticus (strain ATCC 51449 / 3B1).